A 325-amino-acid chain; its full sequence is MGAMAPRTLLLLLAAALAPTQTQAGSHSMRYFETSVSRPGLGEPRFIIVGYVDDTQFVRFDSDAETPRMEPRAPWMEQEGPEYWERETQRAKGNEQSFHVSLRTLLGYYNQSESGSHTIQWMYGCKVGSDGRFLRGYLQYAYDGRDYIALNEDLKTWTAADVAAIITRRKWEQAGAAEYYRAYLEAECVEWLLRYLELGKETLLRTDPPKTHVTHHPGSEGDVTLRCWALGFYPADITLTWQLNGEELTQDMELVETRPAGDGTFQKWASVVVPLGKEQNYTCHVYHEGLPEPLTLRWEPPPSTDSIMSHIADLLWPSLKLWWYL.

An N-terminal signal peptide occupies residues 1-24 (MGAMAPRTLLLLLAAALAPTQTQA). Residues 25–114 (GSHSMRYFET…LLGYYNQSES (90 aa)) are alpha-1. Over 25–310 (GSHSMRYFET…PPSTDSIMSH (286 aa)) the chain is Extracellular. Asparagine 110 carries N-linked (GlcNAc...) asparagine glycosylation. The tract at residues 115–206 (GSHTIQWMYG…ELGKETLLRT (92 aa)) is alpha-2. Intrachain disulfides connect cysteine 125/cysteine 188 and cysteine 227/cysteine 283. An alpha-3 region spans residues 207–298 (DPPKTHVTHH…GLPEPLTLRW (92 aa)). The 89-residue stretch at 209-297 (PKTHVTHHPG…EGLPEPLTLR (89 aa)) folds into the Ig-like C1-type domain. Asparagine 280 is a glycosylation site (N-linked (GlcNAc...) asparagine). A connecting peptide region spans residues 299 to 310 (EPPPSTDSIMSH). Residues 311–324 (IADLLWPSLKLWWY) form a helical membrane-spanning segment.

It belongs to the MHC class I family. In terms of assembly, heterodimer of an alpha chain and a beta chain (beta-2-microglobulin).

It localises to the membrane. Involved in the presentation of foreign antigens to the immune system. This Mus musculus (Mouse) protein is H-2 class I histocompatibility antigen, Q10 alpha chain (H2-Q10).